The chain runs to 125 residues: Phosphoribosyl-AMP cyclohydrolase (125 aa).

Position 74 (Asp74) interacts with Mg(2+). Cys75 lines the Zn(2+) pocket. Positions 76 and 78 each coordinate Mg(2+). Positions 92 and 99 each coordinate Zn(2+).

This sequence belongs to the PRA-CH family. Homodimer. Mg(2+) is required as a cofactor. It depends on Zn(2+) as a cofactor.

It is found in the cytoplasm. The catalysed reaction is 1-(5-phospho-beta-D-ribosyl)-5'-AMP + H2O = 1-(5-phospho-beta-D-ribosyl)-5-[(5-phospho-beta-D-ribosylamino)methylideneamino]imidazole-4-carboxamide. Its pathway is amino-acid biosynthesis; L-histidine biosynthesis; L-histidine from 5-phospho-alpha-D-ribose 1-diphosphate: step 3/9. In terms of biological role, catalyzes the hydrolysis of the adenine ring of phosphoribosyl-AMP. The protein is Phosphoribosyl-AMP cyclohydrolase of Syntrophotalea carbinolica (strain DSM 2380 / NBRC 103641 / GraBd1) (Pelobacter carbinolicus).